Consider the following 62-residue polypeptide: Large ribosomal subunit protein uL30 (62 aa).

It belongs to the universal ribosomal protein uL30 family. Part of the 50S ribosomal subunit.

The sequence is that of Large ribosomal subunit protein uL30 from Halalkalibacterium halodurans (strain ATCC BAA-125 / DSM 18197 / FERM 7344 / JCM 9153 / C-125) (Bacillus halodurans).